A 225-amino-acid chain; its full sequence is NAD(P)H-quinone oxidoreductase subunit K, chloroplastic (225 aa).

[4Fe-4S] cluster contacts are provided by cysteine 43, cysteine 44, cysteine 108, and cysteine 139.

This sequence belongs to the complex I 20 kDa subunit family. NDH is composed of at least 16 different subunits, 5 of which are encoded in the nucleus. It depends on [4Fe-4S] cluster as a cofactor.

It localises to the plastid. Its subcellular location is the chloroplast thylakoid membrane. It catalyses the reaction a plastoquinone + NADH + (n+1) H(+)(in) = a plastoquinol + NAD(+) + n H(+)(out). It carries out the reaction a plastoquinone + NADPH + (n+1) H(+)(in) = a plastoquinol + NADP(+) + n H(+)(out). NDH shuttles electrons from NAD(P)H:plastoquinone, via FMN and iron-sulfur (Fe-S) centers, to quinones in the photosynthetic chain and possibly in a chloroplast respiratory chain. The immediate electron acceptor for the enzyme in this species is believed to be plastoquinone. Couples the redox reaction to proton translocation, and thus conserves the redox energy in a proton gradient. The protein is NAD(P)H-quinone oxidoreductase subunit K, chloroplastic of Crucihimalaya wallichii (Rock-cress).